A 343-amino-acid polypeptide reads, in one-letter code: UDP-N-acetylglucosamine--N-acetylmuramyl-(pentapeptide) pyrophosphoryl-undecaprenol N-acetylglucosamine transferase (343 aa).

UDP-N-acetyl-alpha-D-glucosamine is bound by residues 10–12 (TGG), Asn-113, Ser-174, and Gln-275.

It belongs to the glycosyltransferase 28 family. MurG subfamily.

It is found in the cell membrane. It catalyses the reaction di-trans,octa-cis-undecaprenyl diphospho-N-acetyl-alpha-D-muramoyl-L-alanyl-D-glutamyl-meso-2,6-diaminopimeloyl-D-alanyl-D-alanine + UDP-N-acetyl-alpha-D-glucosamine = di-trans,octa-cis-undecaprenyl diphospho-[N-acetyl-alpha-D-glucosaminyl-(1-&gt;4)]-N-acetyl-alpha-D-muramoyl-L-alanyl-D-glutamyl-meso-2,6-diaminopimeloyl-D-alanyl-D-alanine + UDP + H(+). It participates in cell wall biogenesis; peptidoglycan biosynthesis. In terms of biological role, cell wall formation. Catalyzes the transfer of a GlcNAc subunit on undecaprenyl-pyrophosphoryl-MurNAc-pentapeptide (lipid intermediate I) to form undecaprenyl-pyrophosphoryl-MurNAc-(pentapeptide)GlcNAc (lipid intermediate II). This is UDP-N-acetylglucosamine--N-acetylmuramyl-(pentapeptide) pyrophosphoryl-undecaprenol N-acetylglucosamine transferase from Wolbachia sp. subsp. Drosophila simulans (strain wRi).